A 122-amino-acid chain; its full sequence is Large ribosomal subunit protein bL12 (122 aa).

This sequence belongs to the bacterial ribosomal protein bL12 family. Homodimer. Part of the ribosomal stalk of the 50S ribosomal subunit. Forms a multimeric L10(L12)X complex, where L10 forms an elongated spine to which 2 to 4 L12 dimers bind in a sequential fashion. Binds GTP-bound translation factors.

Its function is as follows. Forms part of the ribosomal stalk which helps the ribosome interact with GTP-bound translation factors. Is thus essential for accurate translation. The protein is Large ribosomal subunit protein bL12 of Shewanella woodyi (strain ATCC 51908 / MS32).